The chain runs to 377 residues: Carbonic anhydrase 1 (377 aa).

An N-terminal signal peptide occupies residues M1–A20. Positions D38–H318 constitute an Alpha-carbonic anhydrase domain. 3 disulfide bridges follow: C61–C264, C194–C198, and C296–C351. A glycan (N-linked (GlcNAc...) asparagine) is linked at N101. H112 (proton acceptor) is an active-site residue. N135 carries N-linked (GlcNAc...) asparagine glycosylation. H163, H165, and H182 together coordinate Zn(2+). Residues T260 and T260–T261 each bind substrate. A glycan (N-linked (GlcNAc...) asparagine) is linked at N297.

It belongs to the alpha-carbonic anhydrase family. Tetramer of two large and two small subunits linked by two disulfide bonds. Zn(2+) serves as cofactor.

It is found in the periplasm. It catalyses the reaction hydrogencarbonate + H(+) = CO2 + H2O. Reversible hydration of carbon dioxide. The polypeptide is Carbonic anhydrase 1 (CAH1) (Chlamydomonas reinhardtii (Chlamydomonas smithii)).